A 904-amino-acid chain; its full sequence is Translation initiation factor IF-2 (904 aa).

Disordered regions lie at residues 103–122 (YVKS…PDEE), 137–252 (NLEE…MVAG), and 267–315 (HLSA…FERP). Residues 137–177 (NLEEQQRLAESDRVRDEAIQRKREEEQAAKDRAEAERKAAE) are compositionally biased toward basic and acidic residues. Low complexity-rich tracts occupy residues 178 to 230 (EAAA…AAPA) and 280 to 293 (RGKP…SSSR). One can recognise a tr-type G domain in the interval 403-572 (SRPPVVTIMG…SLQAEVLELK (170 aa)). The tract at residues 412–419 (GHVDHGKT) is G1. 412–419 (GHVDHGKT) serves as a coordination point for GTP. Positions 437–441 (GITQH) are G2. The segment at 458–461 (DTPG) is G3. Residues 458 to 462 (DTPGH) and 512 to 515 (NKID) contribute to the GTP site. The interval 512–515 (NKID) is G4. Positions 548 to 550 (SAK) are G5.

Belongs to the TRAFAC class translation factor GTPase superfamily. Classic translation factor GTPase family. IF-2 subfamily.

Its subcellular location is the cytoplasm. Its function is as follows. One of the essential components for the initiation of protein synthesis. Protects formylmethionyl-tRNA from spontaneous hydrolysis and promotes its binding to the 30S ribosomal subunits. Also involved in the hydrolysis of GTP during the formation of the 70S ribosomal complex. The chain is Translation initiation factor IF-2 from Xanthomonas euvesicatoria pv. vesicatoria (strain 85-10) (Xanthomonas campestris pv. vesicatoria).